The chain runs to 279 residues: MPEDISRYLFICFKSIFLGIIQGFTEFLPISSTAHLKVVPYLFGWNDLGVSFSASIQLGSAVAIIYYFRNHISLIINSFFSSFNPSKGFKDENSRLFLYIFVASIPILVFGLLIKLYWPNYSDSNLRGLFSIAITSIVMALLLALSEIYGKRNKLFVDINLNDVIKLGLAQSLALFPGVSRSGITLTSALFSGIERKTAARLSFLVGIPAVSISGLVELFSLFRVLSVIDIIPIIIGIISSFFSSIFAIDLFLKFLSKNNTLVFVYYRLAFGIFILTTL.

Helical transmembrane passes span 10–30 (FICFKSIFLGIIQGFTEFLPI), 48–68 (LGVSFSASIQLGSAVAIIYYF), 96–116 (LFLYIFVASIPILVFGLLIKL), 128–148 (GLFSIAITSIVMALLLALSEI), 203–223 (SFLVGIPAVSISGLVELFSLF), 229–249 (IDIIPIIIGIISSFFSSIFAI), and 259–279 (NNTLVFVYYRLAFGIFILTTL).

This sequence belongs to the UppP family.

The protein localises to the cell inner membrane. It carries out the reaction di-trans,octa-cis-undecaprenyl diphosphate + H2O = di-trans,octa-cis-undecaprenyl phosphate + phosphate + H(+). In terms of biological role, catalyzes the dephosphorylation of undecaprenyl diphosphate (UPP). Confers resistance to bacitracin. This Prochlorococcus marinus (strain NATL2A) protein is Undecaprenyl-diphosphatase.